The chain runs to 520 residues: Serine protease Hip1 (520 aa).

The signal sequence occupies residues 1–30; the sequence is MGMRLSRRDKIARMLLIWAALAAVALVLVG. The N-palmitoyl cysteine moiety is linked to residue C31. C31 carries the S-diacylglycerol cysteine lipid modification. Residues 102 to 497 enclose the AB hydrolase-1 domain; the sequence is GSLVINPGGP…TQHTVVFQGD (396 aa). The Nucleophile role is filled by S228. D463 is an active-site residue. H490 functions as the Proton donor in the catalytic mechanism.

The protein belongs to the peptidase S33 family.

It is found in the cell envelope. It localises to the cell membrane. Functionally, serine protease that promotes pathogenesis by promoting the processing and the extracellular release of the M.bovis heat-shock protein GroEL2. Its function is as follows. Key immunomodulatory virulence factor, which promotes survival in host macrophages and modulates host immune responses. In Mycobacterium bovis (strain ATCC BAA-935 / AF2122/97), this protein is Serine protease Hip1.